The sequence spans 425 residues: Glutamyl-tRNA reductase (425 aa).

Substrate-binding positions include 49–52 (TCNR), Ser107, 112–114 (EPQ), and Gln118. The active-site Nucleophile is Cys50. 187-192 (GAGETI) is a binding site for NADP(+).

Belongs to the glutamyl-tRNA reductase family. In terms of assembly, homodimer.

It carries out the reaction (S)-4-amino-5-oxopentanoate + tRNA(Glu) + NADP(+) = L-glutamyl-tRNA(Glu) + NADPH + H(+). The protein operates within porphyrin-containing compound metabolism; protoporphyrin-IX biosynthesis; 5-aminolevulinate from L-glutamyl-tRNA(Glu): step 1/2. Catalyzes the NADPH-dependent reduction of glutamyl-tRNA(Glu) to glutamate 1-semialdehyde (GSA). This Pseudomonas savastanoi pv. phaseolicola (strain 1448A / Race 6) (Pseudomonas syringae pv. phaseolicola (strain 1448A / Race 6)) protein is Glutamyl-tRNA reductase.